A 128-amino-acid polypeptide reads, in one-letter code: Cytochrome c-type biogenesis protein CcmE (128 aa).

The Cytoplasmic segment spans residues methionine 1–arginine 7. A helical; Signal-anchor for type II membrane protein transmembrane segment spans residues leucine 8–isoleucine 28. Residues leucine 29–lysine 128 lie on the Extracellular side of the membrane. Histidine 120 and tyrosine 124 together coordinate heme.

It belongs to the CcmE/CycJ family.

The protein localises to the cell membrane. In terms of biological role, heme chaperone required for the biogenesis of c-type cytochromes. Transiently binds heme delivered by CcmC and transfers the heme to apo-cytochromes in a process facilitated by CcmF and CcmH. The chain is Cytochrome c-type biogenesis protein CcmE from Wolbachia sp. subsp. Brugia malayi (strain TRS).